A 362-amino-acid polypeptide reads, in one-letter code: Probable dual-specificity RNA methyltransferase RlmN (362 aa).

Residue glutamate 105 is the Proton acceptor of the active site. Positions 111–344 (HEYGNSICVT…VTIRREQGHD (234 aa)) constitute a Radical SAM core domain. Cysteine 118 and cysteine 349 are disulfide-bonded. Cysteine 125, cysteine 129, and cysteine 132 together coordinate [4Fe-4S] cluster. Residues 175-176 (GE), serine 207, 230-232 (SLH), and asparagine 306 each bind S-adenosyl-L-methionine. The active-site S-methylcysteine intermediate is the cysteine 349.

It belongs to the radical SAM superfamily. RlmN family. [4Fe-4S] cluster serves as cofactor.

The protein resides in the cytoplasm. It catalyses the reaction adenosine(2503) in 23S rRNA + 2 reduced [2Fe-2S]-[ferredoxin] + 2 S-adenosyl-L-methionine = 2-methyladenosine(2503) in 23S rRNA + 5'-deoxyadenosine + L-methionine + 2 oxidized [2Fe-2S]-[ferredoxin] + S-adenosyl-L-homocysteine. The enzyme catalyses adenosine(37) in tRNA + 2 reduced [2Fe-2S]-[ferredoxin] + 2 S-adenosyl-L-methionine = 2-methyladenosine(37) in tRNA + 5'-deoxyadenosine + L-methionine + 2 oxidized [2Fe-2S]-[ferredoxin] + S-adenosyl-L-homocysteine. Its function is as follows. Specifically methylates position 2 of adenine 2503 in 23S rRNA and position 2 of adenine 37 in tRNAs. This chain is Probable dual-specificity RNA methyltransferase RlmN, found in Bacillus anthracis (strain A0248).